A 328-amino-acid chain; its full sequence is Malate dehydrogenase (328 aa).

11–17 is a binding site for NAD(+); the sequence is GAAGQIG. Residues arginine 92 and arginine 98 each coordinate substrate. Residues asparagine 105, glutamine 112, and 129–131 contribute to the NAD(+) site; that span reads VGN. 2 residues coordinate substrate: asparagine 131 and arginine 162. The Proton acceptor role is filled by histidine 187.

This sequence belongs to the LDH/MDH superfamily. MDH type 2 family.

It catalyses the reaction (S)-malate + NAD(+) = oxaloacetate + NADH + H(+). Its function is as follows. Catalyzes the reversible oxidation of malate to oxaloacetate. This chain is Malate dehydrogenase, found in Coxiella burnetii (strain CbuK_Q154) (Coxiella burnetii (strain Q154)).